Reading from the N-terminus, the 363-residue chain is Putative C-&gt;U-editing enzyme APOBEC-4 (363 aa).

A CMP/dCMP-type deaminase domain is found at 61–177 (PQTKHLTFYE…AWNREALRSL (117 aa)). H93 is a binding site for Zn(2+). Residue E95 is the Proton donor of the active site. Zn(2+)-binding residues include C127 and C134.

The protein belongs to the cytidine and deoxycytidylate deaminase family. Zn(2+) serves as cofactor.

Functionally, putative C to U editing enzyme whose physiological substrate is not yet known. This is Putative C-&gt;U-editing enzyme APOBEC-4 (APOBEC4) from Macaca fascicularis (Crab-eating macaque).